We begin with the raw amino-acid sequence, 113 residues long: Large ribosomal subunit protein uL22 (113 aa).

This sequence belongs to the universal ribosomal protein uL22 family. As to quaternary structure, part of the 50S ribosomal subunit.

In terms of biological role, this protein binds specifically to 23S rRNA; its binding is stimulated by other ribosomal proteins, e.g. L4, L17, and L20. It is important during the early stages of 50S assembly. It makes multiple contacts with different domains of the 23S rRNA in the assembled 50S subunit and ribosome. The globular domain of the protein is located near the polypeptide exit tunnel on the outside of the subunit, while an extended beta-hairpin is found that lines the wall of the exit tunnel in the center of the 70S ribosome. The polypeptide is Large ribosomal subunit protein uL22 (Carboxydothermus hydrogenoformans (strain ATCC BAA-161 / DSM 6008 / Z-2901)).